We begin with the raw amino-acid sequence, 138 residues long: Large ribosomal subunit protein uL14 (138 aa).

Belongs to the universal ribosomal protein uL14 family. As to quaternary structure, part of the 50S ribosomal subunit. Forms a cluster with proteins L3 and L24e, part of which may contact the 16S rRNA in 2 intersubunit bridges.

Binds to 23S rRNA. Forms part of two intersubunit bridges in the 70S ribosome. The chain is Large ribosomal subunit protein uL14 from Metallosphaera sedula (strain ATCC 51363 / DSM 5348 / JCM 9185 / NBRC 15509 / TH2).